A 109-amino-acid polypeptide reads, in one-letter code: Large ribosomal subunit protein uL22 (109 aa).

The protein belongs to the universal ribosomal protein uL22 family. Part of the 50S ribosomal subunit.

In terms of biological role, this protein binds specifically to 23S rRNA; its binding is stimulated by other ribosomal proteins, e.g. L4, L17, and L20. It is important during the early stages of 50S assembly. It makes multiple contacts with different domains of the 23S rRNA in the assembled 50S subunit and ribosome. Functionally, the globular domain of the protein is located near the polypeptide exit tunnel on the outside of the subunit, while an extended beta-hairpin is found that lines the wall of the exit tunnel in the center of the 70S ribosome. This is Large ribosomal subunit protein uL22 from Paraburkholderia xenovorans (strain LB400).